The chain runs to 335 residues: Fructose-1,6-bisphosphatase class 1 (335 aa).

Positions 92, 114, 116, and 117 each coordinate Mg(2+). Residues 117 to 120, N209, and K275 each bind substrate; that span reads DGSS. A Mg(2+)-binding site is contributed by E281.

The protein belongs to the FBPase class 1 family. Homotetramer. It depends on Mg(2+) as a cofactor.

Its subcellular location is the cytoplasm. It carries out the reaction beta-D-fructose 1,6-bisphosphate + H2O = beta-D-fructose 6-phosphate + phosphate. It participates in carbohydrate biosynthesis; gluconeogenesis. The protein is Fructose-1,6-bisphosphatase class 1 of Polaromonas sp. (strain JS666 / ATCC BAA-500).